The primary structure comprises 162 residues: uncharacterized protein (162 aa).

A signal peptide spans 1-34 (MRKKNNIKKWLLIIAGFLIICIITLFVMVSGNKV).

This is an uncharacterized protein from Bacillus subtilis (strain 168).